The chain runs to 78 residues: cAMP-dependent protein kinase inhibitor beta (78 aa).

The segment covering 1–10 (MRTDSSKMTD) has biased composition (basic and acidic residues). Residues 1–78 (MRTDSSKMTD…QLEKPQNEEK (78 aa)) form a disordered region. A compositionally biased stretch (polar residues) spans 33-42 (IQSSAATDGT). Positions 53–78 (SVKEDAKEKDEKTTQDQLEKPQNEEK) are enriched in basic and acidic residues.

The protein belongs to the PKI family.

In terms of biological role, extremely potent competitive inhibitor of cAMP-dependent protein kinase activity, this protein interacts with the catalytic subunit of the enzyme after the cAMP-induced dissociation of its regulatory chains. This is cAMP-dependent protein kinase inhibitor beta (PKIB) from Homo sapiens (Human).